We begin with the raw amino-acid sequence, 371 residues long: Nicotinate-nucleotide pyrophosphorylase [carboxylating], chloroplastic (371 aa).

The N-terminal 48 residues, 1 to 48, are a transit peptide targeting the chloroplast; sequence MPAAAAAAAPPNPNVLQLAPRLRGLVSFPSSYSSSSPFSNRLRLRLPR. Substrate is bound by residues Arg162, 193-195, Arg217, Lys227, Glu260, Asp287, 319-321, and 340-342; these read TRK, SGN, and SGA.

The protein belongs to the NadC/ModD family.

The protein resides in the plastid. The protein localises to the chloroplast. The enzyme catalyses nicotinate beta-D-ribonucleotide + CO2 + diphosphate = quinolinate + 5-phospho-alpha-D-ribose 1-diphosphate + 2 H(+). It participates in cofactor biosynthesis; NAD(+) biosynthesis; nicotinate D-ribonucleotide from quinolinate: step 1/1. Involved in the catabolism of quinolinic acid (QA). The chain is Nicotinate-nucleotide pyrophosphorylase [carboxylating], chloroplastic from Oryza sativa subsp. japonica (Rice).